Consider the following 473-residue polypeptide: Inactive pancreatic lipase-related protein 1 (473 aa).

The N-terminal stretch at 1 to 17 is a signal peptide; it reads MLILWTIPLFLLGAAQG. 2 disulfide bridges follow: Cys-21–Cys-27 and Cys-109–Cys-120. Ser-171 acts as the Nucleophile in catalysis. Asp-194 (charge relay system) is an active-site residue. Ca(2+)-binding residues include Glu-205, Arg-208, Asp-210, and Asp-213. A disulfide bridge connects residues Cys-255 and Cys-279. His-281 (charge relay system) is an active-site residue. Disulfide bonds link Cys-303-Cys-314, Cys-317-Cys-322, and Cys-451-Cys-467. Positions 356–467 constitute a PLAT domain; that stretch reads WRYRVSLTFS…EDILLTLLPC (112 aa).

The protein belongs to the AB hydrolase superfamily. Lipase family. Expressed in female, but not in male, lacrimal gland. Expressed in male and female sublingual gland and pancreas.

Its subcellular location is the secreted. Its function is as follows. May function as inhibitor of dietary triglyceride digestion. Lacks detectable lipase activity (in vitro). In Mus musculus (Mouse), this protein is Inactive pancreatic lipase-related protein 1 (Pnliprp1).